The sequence spans 262 residues: Type II pantothenate kinase (262 aa).

Residue 7-14 (DAGGSLVK) participates in ATP binding. The Proton acceptor role is filled by Glu-71. ATP-binding positions include Thr-101, 119–123 (GGLLT), and Tyr-135.

It belongs to the type II pantothenate kinase family. In terms of assembly, homodimer.

The protein resides in the cytoplasm. The catalysed reaction is (R)-pantothenate + ATP = (R)-4'-phosphopantothenate + ADP + H(+). It participates in cofactor biosynthesis; coenzyme A biosynthesis; CoA from (R)-pantothenate: step 1/5. Its function is as follows. Catalyzes the phosphorylation of pantothenate (Pan), the first step in CoA biosynthesis. The polypeptide is Type II pantothenate kinase (Oceanobacillus iheyensis (strain DSM 14371 / CIP 107618 / JCM 11309 / KCTC 3954 / HTE831)).